We begin with the raw amino-acid sequence, 704 residues long: MARTTPIARYRNIGISAHIDAGKTTTTERILFYTGVNHKIGEVHDGAATMDWMEQEQERGITITSAATTAFWSGMAKQYEPHRINIIDTPGHVDFTIEVERSMRVLDGAVMVYCAVGGVQPQSETVWRQANKYKVPRIAFVNKMDRMGANFLKVVGQIKTRLGANPVPLQLAIGAEEGFTGVVDLVKMKAINWNDADQGVTFEYEDIPADMQDLADEWHQNLIESAAEASEELMEKYLGGEELTEEEIKQALRQRVLNNEIILVTCGSAFKNKGVQAMLDAVIDYLPSPVDVPAINGILDDGKDTPAERHASDDEPFSALAFKIATDPFVGNLTFFRVYSGVVNSGDTVLNSVKTARERFGRIVQMHANKREEIKEVRAGDIAAAIGLKDVTTGDTLCDPENPIILERMEFPEPVISIAVEPKTKADQEKMGLALGRLAKEDPSFRVWTDEESNQTIIAGMGELHLDIIVDRMKREFNVEANVGKPQVAYREAIRAKVTDIEGKHAKQSGGRGQYGHVVIDMYPLEPGSNPKGYEFINDIKGGVIPGEYIPAVDKGIQEQLKSGPLAGYPVVDLGVRLHFGSYHDVDSSELAFKLAASIAFKEGFKKAKPVLLEPIMKVEVETPEENTGDVIGDLSRRRGMLKGQESEVTGVKIHAEVPLSEMFGYATQLRSLTKGRASYTMEFLKYDDAPNNVAQAVIEARGK.

Residues 8–290 (ARYRNIGISA…AVIDYLPSPV (283 aa)) enclose the tr-type G domain. Residues 17-24 (AHIDAGKT), 88-92 (DTPGH), and 142-145 (NKMD) contribute to the GTP site.

The protein belongs to the TRAFAC class translation factor GTPase superfamily. Classic translation factor GTPase family. EF-G/EF-2 subfamily.

It is found in the cytoplasm. Its function is as follows. Catalyzes the GTP-dependent ribosomal translocation step during translation elongation. During this step, the ribosome changes from the pre-translocational (PRE) to the post-translocational (POST) state as the newly formed A-site-bound peptidyl-tRNA and P-site-bound deacylated tRNA move to the P and E sites, respectively. Catalyzes the coordinated movement of the two tRNA molecules, the mRNA and conformational changes in the ribosome. This Salmonella arizonae (strain ATCC BAA-731 / CDC346-86 / RSK2980) protein is Elongation factor G.